A 485-amino-acid chain; its full sequence is Cobyric acid synthase (485 aa).

One can recognise a GATase cobBQ-type domain in the interval 250 to 436; that stretch reads RVLVACPILP…VHGLLANADL (187 aa). Residue C332 is the Nucleophile of the active site. H428 is a catalytic residue.

It belongs to the CobB/CobQ family. CobQ subfamily.

It participates in cofactor biosynthesis; adenosylcobalamin biosynthesis. In terms of biological role, catalyzes amidations at positions B, D, E, and G on adenosylcobyrinic A,C-diamide. NH(2) groups are provided by glutamine, and one molecule of ATP is hydrogenolyzed for each amidation. The sequence is that of Cobyric acid synthase from Rhizorhabdus wittichii (strain DSM 6014 / CCUG 31198 / JCM 15750 / NBRC 105917 / EY 4224 / RW1) (Sphingomonas wittichii).